Here is a 349-residue protein sequence, read N- to C-terminus: SUMO-activating enzyme subunit 1 (349 aa).

Position 1 is an N-acetylmethionine (Met1). N-acetylvaline; in SUMO-activating enzyme subunit 1, N-terminally processed is present on Val2. Ser15 is modified (phosphoserine). Lys201 carries the post-translational modification N6-acetyllysine.

The protein belongs to the ubiquitin-activating E1 family. Heterodimer of SAE1 and UBA2/SAE2. The heterodimer corresponds to the two domains that are encoded on a single polypeptide chain in ubiquitin-activating enzyme E1. Interacts with UBE2I.

The protein localises to the nucleus. It participates in protein modification; protein sumoylation. In terms of biological role, the heterodimer acts as an E1 ligase for SUMO1, SUMO2, SUMO3, and probably SUMO4. It mediates ATP-dependent activation of SUMO proteins followed by formation of a thioester bond between a SUMO protein and a conserved active site cysteine residue on UBA2/SAE2. The protein is SUMO-activating enzyme subunit 1 (Sae1) of Rattus norvegicus (Rat).